Reading from the N-terminus, the 78-residue chain is Large ribosomal subunit protein bL28 (78 aa).

This sequence belongs to the bacterial ribosomal protein bL28 family.

The polypeptide is Large ribosomal subunit protein bL28 (Pasteurella multocida (strain Pm70)).